Consider the following 488-residue polypeptide: SAGA complex subunit HFI1 (488 aa).

2 disordered regions span residues 1–58 and 352–383; these read MSAI…QGPN and QLDDDKNEDECADEAKSINNGNNSSKDDIGDI. A compositionally biased stretch (polar residues) spans 37–58; that stretch reads AVSNHTEPNNGNNETAEPQGPN.

Component of the 1.8 MDa SAGA (Spt-Ada-Gcn5 acetyltransferase) complex, which is composed of 19 subunits TRA1, SPT7, TAF5, NGG1/ADA3, SGF73, SPT20/ADA5, SPT8, TAF12, TAF6, HFI1/ADA1, UBP8, GCN5, ADA2, SPT3, SGF29, TAF10, TAF9, SGF11 and SUS1. The SAGA complex is composed of 4 modules, namely the HAT (histone acetyltransferase) module (GCN5, ADA2, NGG1/ADA3 and SGF29), the DUB (deubiquitinating) module (UBP8, SGF11, SGF73 and SUS1), the core or TAF (TBP-associated factor) module (TAF5, TAF6, TAF9, TAF10 and TAF12), and the Tra1 or SPT (Suppressor of Ty) module (TRA1, HFI1/ADA1, SPT3, SPT7, SPT8 and SPT20/ADA5). The Tra1/SPT module binds activators, the core module recruits TBP (TATA-binding protein), the HAT module contains the histone H3 acetyltransferase GCN5, and the DUB module comprises the histone H2B deubiquitinase UBP8. Also identified in an altered form of SAGA, named SALSA (SAGA altered, Spt8 absent) or SLIK (SAGA-like) complex, which contains a C-terminal truncated form of SPT7 and is missing SPT8. However, it has been shown that the SAGA and SAGA-like SALSA/SLIK transcriptional coactivators are structurally and biochemically equivalent. Component of an ADA/GCN5 complex that consists of HFI1/ADA1, ADA2, NGG1/ADA3, SPT20/ADA5 and GCN5 and probably is a subcomplex of SAGA.

The protein resides in the nucleus. Its function is as follows. Component of the transcription coactivator SAGA complex. SAGA acts as a general cofactor required for essentially all RNA polymerase II transcription. At the promoters, SAGA is required for transcription pre-initiation complex (PIC) recruitment. It influences RNA polymerase II transcriptional activity through different activities such as TBP interaction (via core/TAF module) and promoter selectivity, interaction with transcription activators (via Tra1/SPT module), and chromatin modification through histone acetylation (via HAT module) and deubiquitination (via DUB module). SAGA preferentially acetylates histones H3 (to form H3K9ac, H3K14ac, H3K18ac and H3K23ac) and H2B and deubiquitinates histone H2B. SAGA interacts with DNA via upstream activating sequences (UASs). Also identified in a modified version of SAGA named SALSA or SLIK. The cleavage of SPT7 and the absence of the SPT8 subunit in SLIK neither drive any major conformational differences in its structure compared with SAGA, nor significantly affect HAT, DUB, or DNA-binding activities. The protein is SAGA complex subunit HFI1 (HFI1) of Saccharomyces cerevisiae (strain ATCC 204508 / S288c) (Baker's yeast).